The chain runs to 189 residues: Accessory gene regulator protein B (189 aa).

Transmembrane regions (helical) follow at residues Val50–Ile70, Leu83–Val103, Val105–Ala125, Lys143–Pro163, and Tyr164–Phe184.

It belongs to the AgrB family.

The protein resides in the cell membrane. Essential for the production of a quorum sensing system signal molecule, the autoinducing peptide (AIP). This quorum sensing system is responsible for the regulation of the expression of virulence factor genes. Involved in the proteolytic processing of AgrD, the precursor of AIP. This is Accessory gene regulator protein B from Staphylococcus saprophyticus subsp. saprophyticus (strain ATCC 15305 / DSM 20229 / NCIMB 8711 / NCTC 7292 / S-41).